The following is a 37-amino-acid chain: Large ribosomal subunit protein bL36A (37 aa).

It belongs to the bacterial ribosomal protein bL36 family.

This chain is Large ribosomal subunit protein bL36A, found in Haemophilus ducreyi (strain 35000HP / ATCC 700724).